The chain runs to 60 residues: Large ribosomal subunit protein bL32 (60 aa).

The segment at Met1 to Glu60 is disordered. A compositionally biased stretch (basic residues) spans Arg49–Glu60.

It belongs to the bacterial ribosomal protein bL32 family.

This chain is Large ribosomal subunit protein bL32, found in Bordetella avium (strain 197N).